Reading from the N-terminus, the 225-residue chain is GTP cyclohydrolase 1 (225 aa).

Over residues 1-12 (MERSKQSHDNQA) the composition is skewed to basic and acidic residues. The disordered stretch occupies residues 1–59 (MERSKQSHDNQADSRPTTNESSLNGHFDGLVKKTPGMWDVKGRGTAGESSSHTGSSVVE). Composition is skewed to polar residues over residues 13–24 (DSRPTTNESSLN) and 47–58 (GESSSHTGSSVV). 3 residues coordinate Zn(2+): Cys-149, His-152, and Cys-220.

This sequence belongs to the GTP cyclohydrolase I family. As to quaternary structure, toroid-shaped homodecamer, composed of two pentamers of five dimers.

It localises to the cytoplasm. The protein localises to the nucleus. It carries out the reaction GTP + H2O = 7,8-dihydroneopterin 3'-triphosphate + formate + H(+). It participates in cofactor biosynthesis; 7,8-dihydroneopterin triphosphate biosynthesis; 7,8-dihydroneopterin triphosphate from GTP: step 1/1. GTP shows a positive allosteric effect, and tetrahydrobiopterin inhibits the enzyme activity. Zinc is required for catalytic activity. Inhibited by Mg(2+). Functionally, may positively regulate nitric oxide synthesis in endothelial cells. May be involved in dopamine synthesis. May modify pain sensitivity and persistence. The sequence is that of GTP cyclohydrolase 1 (gch1) from Oncorhynchus mykiss (Rainbow trout).